A 401-amino-acid polypeptide reads, in one-letter code: Enoyl-[acyl-carrier-protein] reductase [NADH] (401 aa).

NAD(+) contacts are provided by residues 48-53, 74-75, 111-112, and 140-141; these read GASSGY, FE, DA, and LA. Tyr226 provides a ligand contact to substrate. The Proton donor role is filled by Tyr236. NAD(+) is bound by residues Lys245 and 274 to 276; that span reads VVT.

This sequence belongs to the TER reductase family. Monomer.

It carries out the reaction a 2,3-saturated acyl-[ACP] + NAD(+) = a (2E)-enoyl-[ACP] + NADH + H(+). The protein operates within lipid metabolism; fatty acid biosynthesis. Its function is as follows. Involved in the final reduction of the elongation cycle of fatty acid synthesis (FAS II). Catalyzes the reduction of a carbon-carbon double bond in an enoyl moiety that is covalently linked to an acyl carrier protein (ACP). This is Enoyl-[acyl-carrier-protein] reductase [NADH] from Xylella fastidiosa (strain Temecula1 / ATCC 700964).